The following is a 434-amino-acid chain: Histidine--tRNA ligase (434 aa).

The protein belongs to the class-II aminoacyl-tRNA synthetase family. Homodimer.

Its subcellular location is the cytoplasm. The enzyme catalyses tRNA(His) + L-histidine + ATP = L-histidyl-tRNA(His) + AMP + diphosphate + H(+). The chain is Histidine--tRNA ligase from Chlorobium phaeobacteroides (strain BS1).